The primary structure comprises 153 residues: 3-hydroxyacyl-[acyl-carrier-protein] dehydratase FabZ (153 aa).

Residue histidine 53 is part of the active site.

It belongs to the thioester dehydratase family. FabZ subfamily.

It localises to the cytoplasm. It carries out the reaction a (3R)-hydroxyacyl-[ACP] = a (2E)-enoyl-[ACP] + H2O. In terms of biological role, involved in unsaturated fatty acids biosynthesis. Catalyzes the dehydration of short chain beta-hydroxyacyl-ACPs and long chain saturated and unsaturated beta-hydroxyacyl-ACPs. The sequence is that of 3-hydroxyacyl-[acyl-carrier-protein] dehydratase FabZ from Lawsonia intracellularis (strain PHE/MN1-00).